The following is a 470-amino-acid chain: MPNSTGKIAQVIGPVVDVAFPINDNLPEINNALTITRKDGSQLVLEVALELGDGVMRTIAMDSTDGLQRGMAVEDTGGPISVPVGKDTLGRVFNVLGDPIDDGEALDLNHRRDSIHRDAPKFEDLNTSSEILETGIKVIDLLEPYLRGGKVGLFGGAGVGKTVLIQELIHNIAEEHGGISVFTGVGERTREGNDLYFEMKESGVMENTAMVFGQMNEPPGARMRVALTGLTIAEYFRDVEGQDVLLFIDNIFRFTQAGSEVSALLGRIPSAVGYQPTLATEMGQLQERITSTKKGSVTSIQAIYVPADDYTDPAPRTTFAHLDATTNLERRLTEQGIYPAVDPLESSSSALTPEIVGEEHYKVATEVQQVLQRYRELQDIISILGMDELSDEEKVIVARARRVQFFLSQNFNVAERFTGQPGSYVPVEETVKGFKQILEGKYDDYPEDAFRSVGRIEEVVEKAKKMGFAP.

155 to 162 (GGAGVGKT) contributes to the ATP binding site.

The protein belongs to the ATPase alpha/beta chains family. As to quaternary structure, F-type ATPases have 2 components, CF(1) - the catalytic core - and CF(0) - the membrane proton channel. CF(1) has five subunits: alpha(3), beta(3), gamma(1), delta(1), epsilon(1). CF(0) has three main subunits: a(1), b(2) and c(9-12). The alpha and beta chains form an alternating ring which encloses part of the gamma chain. CF(1) is attached to CF(0) by a central stalk formed by the gamma and epsilon chains, while a peripheral stalk is formed by the delta and b chains.

The protein localises to the cell membrane. It catalyses the reaction ATP + H2O + 4 H(+)(in) = ADP + phosphate + 5 H(+)(out). Produces ATP from ADP in the presence of a proton gradient across the membrane. The catalytic sites are hosted primarily by the beta subunits. In Lacticaseibacillus casei (Lactobacillus casei), this protein is ATP synthase subunit beta.